The chain runs to 1138 residues: MNLNNLDGYEDSNRTLNNSLNYPTQKALSPSLKNMNYQDFLSITEREQPEALASGNTAINTVVSVTGATLSALGVPGASFITNFYLKIAGLLWPENGKIWDEFMTEVEALIDQKIEEYVRNKAIAELDGLGSALDKYQKALADWLGKQDDPEAILSVATEFRIIDSLFEFSMPSFKVTGYEIPLLTVYAQAANLHLALLRDSTLYGDKWGFTQNNIEENYNRQKKRISEYSDHCTKWYNSGLSRLNGSTYEQWINYNRFRREMILMALDLVAVFPFHDPRRYSMETSTQLTREVYTDPVSLSISNPDIGPSFSQMENTAIRTPHLVDYLDELYIYTSKYKAFSHEIQPDLFYWSAHKVSFKKSEQSNLYTTGIYGKTSGYISSGAYSFHGNDIYRTLAAPSVVVYPYTQNYGVEQVEFYGVKGHVHYRGDNKYDLTYDSIDQLPPDGEPIHEKYTHRLCHATAIFKSTPDYDNATIPIFSWTHRSAEYYNRIYPNKITKIPAVKMYKLDDPSTVVKGPGFTGGDLVKRGSTGYIGDIKATVNSPLSQKYRVRVRYATNVSGQFNVYINDKITLQTKFQNTVETIGEGKDLTYGSFGYIEYSTTIQFPDEHPKITLHLSDLSNNSSFYVDSIEFIPVDVNYAEKEKLEKAQKAVNTLFTEGRNALQKDVTDYKVDQVSILVDCISGDLYPNEKRELQNLVKYAKRLSYSRNLLLDPTFDSINSSEENGWYGSNGIVIGNGDFVFKGNYLIFSGTNDTQYPTYLYQKIDESKLKEYTRYKLKGFIESSQDLEAYVIRYDAKHRTLDVSDNLLPDILPENTCGEPNRCAAQQYLDENPSPECSSMQDGILSDSHSFSLNIDTGSINHNENLGIWVLFKISTLEGYAKFGNLEVIEDGPVIGEALARVKRQETKWRNKLAQLTTETQAIYTRAKQALDNLFANAQDSHLKRDVTFAEIAAARKIVQSIREAYMSWLSVVPGVNHPIFTELSGRVQRAFQLYDVRNVVRNGRFLNGLSDWIVTSDVKVQEENGNNVLVLNNWDAQVLQNVKLYQDRGYILHVTARKIGIGEGYITITDEEGHTDQLRFTACEEIDASNAFISGYITKELEFFPDTEKVHIEIGETEGIFLVESIELFLMEELC.

It belongs to the delta endotoxin family.

Functionally, promotes colloidosmotic lysis by binding to the midgut epithelial cells of Coleoptera. This protein is not toxic in its natural form. It is highly toxic to Colorado potato beetle larvae after an in vitro solubilization and trypsin activation step. The sequence is that of Pesticidal crystal protein Cry7Aa (cry7Aa) from Bacillus thuringiensis.